Here is a 166-residue protein sequence, read N- to C-terminus: Putative tRNA (cytidine(34)-2'-O)-methyltransferase (166 aa).

Positions 83, 109, 130, and 138 each coordinate S-adenosyl-L-methionine.

The protein belongs to the class IV-like SAM-binding methyltransferase superfamily. RNA methyltransferase TrmH family. TrmL subfamily.

It localises to the cytoplasm. It catalyses the reaction cytidine(34) in tRNA + S-adenosyl-L-methionine = 2'-O-methylcytidine(34) in tRNA + S-adenosyl-L-homocysteine + H(+). It carries out the reaction 5-carboxymethylaminomethyluridine(34) in tRNA(Leu) + S-adenosyl-L-methionine = 5-carboxymethylaminomethyl-2'-O-methyluridine(34) in tRNA(Leu) + S-adenosyl-L-homocysteine + H(+). Functionally, could methylate the ribose at the nucleotide 34 wobble position in tRNA. The sequence is that of Putative tRNA (cytidine(34)-2'-O)-methyltransferase from Mycoplasma pneumoniae (strain ATCC 29342 / M129 / Subtype 1) (Mycoplasmoides pneumoniae).